A 191-amino-acid chain; its full sequence is MTQQITLIKDKILSDNYFTLHNITYDLTRKDGEVIRHKREVYDRGNGATILLYNTKKKTVVLIRQFRVATWVNGNESGQLIESCAGLLDNDEPEVCIRKEAIEETGYEVGEVRKLFELYMSPGGVTELIHFFIAEYSDNQRANAGGGVEDEDIEVLELPFSQALEMIKTGEIRDGKTVLLLNYLQTSHLMD.

GDP-alpha-D-mannose is bound by residues Tyr17, 38–40 (KRE), Arg67, and 85–87 (AGL). The Nudix hydrolase domain maps to 43–180 (DRGNGATILL…EIRDGKTVLL (138 aa)). Mg(2+)-binding residues include Ala85, Glu100, and Glu104. The Nudix box motif lies at 86–106 (GLLDNDEPEVCIRKEAIEETG). GDP-alpha-D-mannose is bound by residues Glu104, Glu127, 150 to 151 (DE), and Lys176. Glu151 lines the Mg(2+) pocket.

Belongs to the Nudix hydrolase family. NudK subfamily. As to quaternary structure, homodimer. The cofactor is Mg(2+).

The catalysed reaction is GDP-alpha-D-mannose + H2O = alpha-D-mannose 1-phosphate + GMP + 2 H(+). Functionally, nucleoside diphosphate sugar hydrolase that hydrolyzes GDP-mannose as its preferred substrate, yielding GMP and mannose-1-phosphate. The protein is GDP-mannose pyrophosphatase (nudK) of Escherichia coli (strain K12 / DH10B).